A 37-amino-acid chain; its full sequence is Large ribosomal subunit protein bL36B (37 aa).

The protein belongs to the bacterial ribosomal protein bL36 family.

The chain is Large ribosomal subunit protein bL36B from Saccharopolyspora erythraea (strain ATCC 11635 / DSM 40517 / JCM 4748 / NBRC 13426 / NCIMB 8594 / NRRL 2338).